Reading from the N-terminus, the 422-residue chain is 3-isopropylmalate dehydratase large subunit (422 aa).

[4Fe-4S] cluster contacts are provided by Cys-303, Cys-363, and Cys-366.

Belongs to the aconitase/IPM isomerase family. LeuC type 2 subfamily. Heterodimer of LeuC and LeuD. [4Fe-4S] cluster serves as cofactor.

The enzyme catalyses (2R,3S)-3-isopropylmalate = (2S)-2-isopropylmalate. Its pathway is amino-acid biosynthesis; L-leucine biosynthesis; L-leucine from 3-methyl-2-oxobutanoate: step 2/4. Catalyzes the isomerization between 2-isopropylmalate and 3-isopropylmalate, via the formation of 2-isopropylmaleate. This is 3-isopropylmalate dehydratase large subunit from Wolinella succinogenes (strain ATCC 29543 / DSM 1740 / CCUG 13145 / JCM 31913 / LMG 7466 / NCTC 11488 / FDC 602W) (Vibrio succinogenes).